An 89-amino-acid chain; its full sequence is U-scoloptoxin(11)-Sm4a (89 aa).

The first 17 residues, 1-17, serve as a signal peptide directing secretion; sequence MFFKLVLVSAVAIQALS.

The protein belongs to the scoloptoxin-11 family. Post-translationally, contains 3 disulfide bonds. In terms of tissue distribution, expressed by the venom gland.

Its subcellular location is the secreted. This chain is U-scoloptoxin(11)-Sm4a, found in Scolopendra morsitans (Tanzanian blue ringleg centipede).